The sequence spans 1392 residues: DNA-directed RNA polymerase subunit beta'' (1392 aa).

4 residues coordinate Zn(2+): cysteine 224, cysteine 295, cysteine 302, and cysteine 305.

Belongs to the RNA polymerase beta' chain family. RpoC2 subfamily. As to quaternary structure, in plastids the minimal PEP RNA polymerase catalytic core is composed of four subunits: alpha, beta, beta', and beta''. When a (nuclear-encoded) sigma factor is associated with the core the holoenzyme is formed, which can initiate transcription. Zn(2+) serves as cofactor.

The protein resides in the plastid. It is found in the chloroplast. The enzyme catalyses RNA(n) + a ribonucleoside 5'-triphosphate = RNA(n+1) + diphosphate. DNA-dependent RNA polymerase catalyzes the transcription of DNA into RNA using the four ribonucleoside triphosphates as substrates. This is DNA-directed RNA polymerase subunit beta'' from Solanum tuberosum (Potato).